The chain runs to 407 residues: Phospholipase A1-II 7 (407 aa).

Ser-230 functions as the Acyl-ester intermediate in the catalytic mechanism. Catalysis depends on charge relay system residues Ser-230, Asp-299, and His-336.

Belongs to the AB hydrolase superfamily. Lipase family.

It localises to the cytoplasm. Acylhydrolase that catalyzes the hydrolysis of phospholipids at the sn-1 position. This is Phospholipase A1-II 7 from Oryza sativa subsp. indica (Rice).